The sequence spans 546 residues: U3 small nucleolar RNA-associated protein 18 homolog (546 aa).

3 disordered regions span residues 1–55 (MSLS…LEES), 94–118 (SAVR…EENG), and 177–205 (NPGT…DGGV). A compositionally biased stretch (basic and acidic residues) spans 13–23 (IKREELKKQYE). A compositionally biased stretch (acidic residues) spans 24–35 (DVEDEEEIGSDD). A Phosphoserine modification is found at serine 33. Residues 45-55 (TEKEKQKLEES) are compositionally biased toward basic and acidic residues. 2 stretches are compositionally biased toward acidic residues: residues 101–117 (DYED…DEEN) and 193–205 (ESSD…DGGV). WD repeat units lie at residues 242-281 (PSNG…NTKI), 372-411 (KMNG…CLYK), 413-454 (VDEG…GGKR), and 509-545 (STMH…HYQN). Residues 389 to 404 (LLSSGGDGQVYVWDLR) carry the DWD box motif.

The protein belongs to the WD repeat UTP18 family.

The protein resides in the nucleus. It is found in the nucleolus. Functionally, involved in nucleolar processing of pre-18S ribosomal RNA. This Arabidopsis thaliana (Mouse-ear cress) protein is U3 small nucleolar RNA-associated protein 18 homolog.